We begin with the raw amino-acid sequence, 274 residues long: uncharacterized protein (274 aa).

Residues 235–274 (ETFDTQQDPKKTPETDKNAAYKGKEKKGKKEERGPRSIMK) form a disordered region. Basic and acidic residues predominate over residues 241-274 (QDPKKTPETDKNAAYKGKEKKGKKEERGPRSIMK).

This is an uncharacterized protein from Treponema pallidum (strain Nichols).